Consider the following 129-residue polypeptide: Small ribosomal subunit protein uS9 (129 aa).

Belongs to the universal ribosomal protein uS9 family.

The sequence is that of Small ribosomal subunit protein uS9 (rpsI) from Helicobacter pylori (strain J99 / ATCC 700824) (Campylobacter pylori J99).